The following is a 377-amino-acid chain: Formate dehydrogenase, mitochondrial (377 aa).

A mitochondrion-targeting transit peptide spans 1–29 (MAAMWRAAARQLVDRAVGSRAAHTSAGSK). The substrate site is built by isoleucine 121 and asparagine 145. NAD(+)-binding positions include threonine 146, aspartate 220, 255 to 259 (PLTEK), asparagine 281, aspartate 307, and 331 to 334 (HISG).

It belongs to the D-isomer specific 2-hydroxyacid dehydrogenase family. FDH subfamily. Homodimer.

The protein resides in the mitochondrion. It carries out the reaction formate + NAD(+) = CO2 + NADH. Functionally, catalyzes the NAD(+)-dependent oxidation of formate to carbon dioxide. Involved in the cell stress response. The sequence is that of Formate dehydrogenase, mitochondrial from Hordeum vulgare (Barley).